A 248-amino-acid chain; its full sequence is 2,3-bisphosphoglycerate-dependent phosphoglycerate mutase (248 aa).

Substrate is bound by residues 8-15, 21-22, Arg-60, 87-90, Lys-98, 114-115, and 183-184; these read RHGESVWN, TG, ERHY, RR, and GN. His-9 functions as the Tele-phosphohistidine intermediate in the catalytic mechanism. Residue Glu-87 is the Proton donor/acceptor of the active site.

Belongs to the phosphoglycerate mutase family. BPG-dependent PGAM subfamily.

The enzyme catalyses (2R)-2-phosphoglycerate = (2R)-3-phosphoglycerate. It participates in carbohydrate degradation; glycolysis; pyruvate from D-glyceraldehyde 3-phosphate: step 3/5. In terms of biological role, catalyzes the interconversion of 2-phosphoglycerate and 3-phosphoglycerate. The chain is 2,3-bisphosphoglycerate-dependent phosphoglycerate mutase from Brachyspira hyodysenteriae (strain ATCC 49526 / WA1).